The chain runs to 444 residues: Orexin receptor type 2 (444 aa).

The span at 1-10 shows a compositional bias: basic and acidic residues; the sequence is MSGTKLEDSP. Residues 1–20 are disordered; it reads MSGTKLEDSPPCRNWSSASE. At 1–54 the chain is on the extracellular side; it reads MSGTKLEDSPPCRNWSSASELNETQEPFLNPTDYDDEEFLRYLWREYLHPKEYE. N-linked (GlcNAc...) asparagine glycans are attached at residues Asn14 and Asn22. Positions 33–49 are required for response to orexin-A; sequence DYDDEEFLRYLWREYLH. Residues 55-75 form a helical membrane-spanning segment; the sequence is WVLIAGYIIVFVVALIGNVLV. Over 76–88 the chain is Cytoplasmic; sequence CVAVWKNHHMRTV. Residues 89–110 traverse the membrane as a helical segment; sequence TNYFIVNLSLADVLVTITCLPA. The Extracellular portion of the chain corresponds to 111–127; it reads TLVVDITETWFFGQSLC. Cys127 and Cys210 form a disulfide bridge. The helical transmembrane segment at 128 to 150 threads the bilayer; that stretch reads KVIPYLQTVSVSVSVLTLSCIAL. The Cytoplasmic segment spans residues 151–170; the sequence is DRWYAICHPLMFKSTAKRAR. Residues 171–191 form a helical membrane-spanning segment; that stretch reads NSIVIIWIVSCIIMIPQAIVM. Topologically, residues 192–222 are extracellular; it reads ECSTVFPGLANKTTLFTVCDERWGGEIYPKM. Residue Asn202 is glycosylated (N-linked (GlcNAc...) asparagine). A helical transmembrane segment spans residues 223–243; it reads YHICFFLVTYMAPLCLMVLAY. Over 244–304 the chain is Cytoplasmic; that stretch reads LQIFRKLWCR…QIRARRKTAR (61 aa). The helical transmembrane segment at 305–326 threads the bilayer; it reads MLMIVLLVFAICYLPISILNVL. A suvorexant-binding site is contributed by Asn324. Topologically, residues 327–342 are extracellular; that stretch reads KRVFGMFAHTEDRETV. The helical transmembrane segment at 343–366 threads the bilayer; that stretch reads YAWFTFSHWLVYANSAANPIIYNF. Over 367–444 the chain is Cytoplasmic; that stretch reads LSGKFREEFK…ANGAGPLQNW (78 aa).

Belongs to the G-protein coupled receptor 1 family.

It localises to the cell membrane. Nonselective, high-affinity receptor for both orexin-A and orexin-B neuropeptides. Triggers an increase in cytoplasmic Ca(2+) levels in response to orexin-A binding. This Homo sapiens (Human) protein is Orexin receptor type 2 (HCRTR2).